Here is a 258-residue protein sequence, read N- to C-terminus: Phosphate import ATP-binding protein PstB 3 (258 aa).

The ABC transporter domain maps to 10-253 (MTARSLAVHY…PANSLTQGYI (244 aa)). An ATP-binding site is contributed by 42-49 (GPSGCGKS).

The protein belongs to the ABC transporter superfamily. Phosphate importer (TC 3.A.1.7) family. As to quaternary structure, the complex is composed of two ATP-binding proteins (PstB), two transmembrane proteins (PstC and PstA) and a solute-binding protein (PstS).

Its subcellular location is the cell inner membrane. It carries out the reaction phosphate(out) + ATP + H2O = ADP + 2 phosphate(in) + H(+). Its function is as follows. Part of the ABC transporter complex PstSACB involved in phosphate import. Responsible for energy coupling to the transport system. The protein is Phosphate import ATP-binding protein PstB 3 of Paramagnetospirillum magneticum (strain ATCC 700264 / AMB-1) (Magnetospirillum magneticum).